The sequence spans 686 residues: MTPASRSACRWALLLLAVLWPQQRAAGSGIFQLRLQEFVNQRGMLANGQSCEPGCRTFFRICLKHFQATFSEGPCTFGNVSTPVLGTNSFVVRDKNSGSGRNPLQLPFNFTWPGTFSLNIQAWHTPGDDLRPETSPGNSLISQIIIQGSLAVGKIWRTDEQNDTLTRLSYSYRVICSDNYYGESCSRLCKKRDDHFGHYECQPDGSLSCLPGWTGKYCDQPICLSGCHEQNGYCSKPDECICRPGWQGRLCNECIPHNGCRHGTCSIPWQCACDEGWGGLFCDQDLNYCTHHSPCKNGSTCSNSGPKGYTCTCLPGYTGEHCELGLSKCASNPCRNGGSCKDQENSYHCLCPPGYYGQHCEHSTLTCADSPCFNGGSCRERNQGSSYACECPPNFTGSNCEKKVDRCTSNPCANGGQCQNRGPSRTCRCRPGFTGTHCELHISDCARSPCAHGGTCHDLENGPVCTCPAGFSGRRCEVRITHDACASGPCFNGATCYTGLSPNNFVCNCPYGFVGSRCEFPVGLPPSFPWVAVSLGVGLVVLLVLLVMVVVAVRQLRLRRPDDESREAMNNLSDFQKDNLIPAAQLKNTNQKKELEVDCGLDKSNCGKLQNHTLDYNLAPGLLGRGGMPGKYPHSDKSLGEKVPLRLHSEKPECRISAICSPRDSMYQSVCLISEERNECVIATEV.

The first 26 residues, 1–26, serve as a signal peptide directing secretion; that stretch reads MTPASRSACRWALLLLAVLWPQQRAA. The Extracellular segment spans residues 27 to 532; sequence GSGIFQLRLQ…GLPPSFPWVA (506 aa). 2 disulfide bridges follow: Cys-51–Cys-55 and Cys-62–Cys-75. 3 N-linked (GlcNAc...) asparagine glycosylation sites follow: Asn-79, Asn-109, and Asn-162. In terms of domain architecture, DSL spans 174–218; the sequence is VICSDNYYGESCSRLCKKRDDHFGHYECQPDGSLSCLPGWTGKYC. Residues Cys-176 and Cys-185 are joined by a disulfide bond. Interaction with Notch1 regions lie at residues 186-188 and 192-196; these read SRL and RDDHF. 26 disulfides stabilise this stretch: Cys-189/Cys-201, Cys-209/Cys-218, Cys-223/Cys-234, Cys-227/Cys-240, Cys-242/Cys-251, Cys-254/Cys-265, Cys-260/Cys-271, Cys-273/Cys-282, Cys-289/Cys-301, Cys-295/Cys-311, Cys-313/Cys-322, Cys-329/Cys-340, Cys-334/Cys-349, Cys-351/Cys-360, Cys-367/Cys-378, Cys-372/Cys-389, Cys-391/Cys-400, Cys-407/Cys-418, Cys-412/Cys-427, Cys-429/Cys-438, Cys-445/Cys-456, Cys-450/Cys-465, Cys-467/Cys-476, Cys-485/Cys-496, Cys-490/Cys-507, and Cys-509/Cys-518. EGF-like domains follow at residues 219-252, 253-283, 285-323, 325-361, 364-401, 403-439, 441-477, and 481-519; these read DQPI…RLCN, ECIP…LFCD, DLNY…EHCE, GLSK…QHCE, TLTC…SNCE, KVDR…THCE, HISD…RRCE, and THDA…SRCE. The N-linked (GlcNAc...) asparagine glycan is linked to Asn-297. N-linked (GlcNAc...) asparagine glycosylation is present at Asn-394. A helical transmembrane segment spans residues 533 to 553; the sequence is VSLGVGLVVLLVLLVMVVVAV. At 554-686 the chain is on the cytoplasmic side; sequence RQLRLRRPDD…RNECVIATEV (133 aa).

In terms of assembly, interacts with NOTCH4. Interacts (via N-terminal DSL and MNNL domains) with NOTCH1 (via EGF-like domains). As to expression, expressed in vascular endothelium. Expressed in retina at least during embryogenesis.

Its subcellular location is the cell membrane. Its function is as follows. Involved in the Notch signaling pathway as Notch ligand. Activates NOTCH1 and NOTCH4. Involved in angiogenesis; negatively regulates endothelial cell proliferation and migration and angiogenic sprouting. Essential for retinal progenitor proliferation. Required for suppressing rod fates in late retinal progenitors as well as for proper generation of other retinal cell types. During spinal cord neurogenesis, inhibits V2a interneuron fate. The chain is Delta-like protein 4 (Dll4) from Mus musculus (Mouse).